Consider the following 492-residue polypeptide: 5-taurinomethyluridine-[tRNA] synthase subunit GTPB3, mitochondrial (492 aa).

A mitochondrion-targeting transit peptide spans 1 to 20; sequence MWRGLSALVTQAAWAPLRLC. 5,10-methylenetetrahydrofolate contacts are provided by Arg-52, Glu-112, and Lys-152. The TrmE-type G domain maps to 249 to 416; the sequence is GANVVVTGPP…LLQALKTELA (168 aa). Residues 256 to 263, 282 to 286, 303 to 306, and 374 to 377 contribute to the GTP site; these read GPPNAGKS, GTTRD, DTAG, and NKSD. K(+) is bound at residue Asn-259. The Mg(2+) site is built by Ser-263 and Thr-284. Residue Lys-492 participates in 5,10-methylenetetrahydrofolate binding.

It belongs to the TRAFAC class TrmE-Era-EngA-EngB-Septin-like GTPase superfamily. TrmE GTPase family. As to quaternary structure, homodimer; forms a dimer in the presence of potassium. Interacts with MTO1; forms the GTPBP3-MTO1 complex composed of homodimers of GTPBP3 and MTO1. It depends on K(+) as a cofactor. As to expression, ubiquitously expressed. Highly expressed in tissues with high metabolic rates including heart, liver and brain. Weakly expressed in skeletal muscle.

The protein localises to the mitochondrion. The enzyme catalyses GTP + H2O = GDP + phosphate + H(+). In terms of biological role, GTPase component of the GTPBP3-MTO1 complex that catalyzes the 5-taurinomethyluridine (taum(5)U) modification at the 34th wobble position (U34) of mitochondrial tRNAs (mt-tRNAs), which plays a role in mt-tRNA decoding and mitochondrial translation. Taum(5)U formation on mammalian mt-tRNA requires the presence of both GTPBP3-mediated GTPase activity and MTO1 catalytic activity. The chain is 5-taurinomethyluridine-[tRNA] synthase subunit GTPB3, mitochondrial from Mus musculus (Mouse).